The chain runs to 782 residues: Homeotic protein proboscipedia (782 aa).

6 disordered regions span residues 1–23 (MQEVCSSLDTTSMGTQIKSESPL), 153–195 (PQTP…VPEN), 251–336 (MKHK…GISS), 358–380 (SSVSLDEDIEESSPIKVKKKDDG), 439–493 (IATP…QQQP), and 547–586 (YYNYNDTNGTPYLNHQQQHHHHAQHHQQQQHHQNHVADFE). The short motif at 164–169 (EYPWMK) is the Antp-type hexapeptide element. The homeobox DNA-binding region spans 198-257 (PRRLRTAYTNTQLLELEKEFHFNKYLCRPRRIEIAASLDLTERQVKVWFQNRRMKHKRQT). Residues 308–321 (NNNTPSATNNNPSA) show a composition bias toward low complexity. The span at 322 to 336 (GNLTPNSSLETGISS) shows a compositional bias: polar residues. Residues 452–463 (NGSGGGPAGGYF) are compositionally biased toward gly residues. Low complexity predominate over residues 464–493 (PGYYPSPKQQQQVQQQQLHPQQQQLPQQQP). Basic residues predominate over residues 563-580 (QQHHHHAQHHQQQQHHQN).

The protein belongs to the Antp homeobox family. Proboscipedia subfamily.

It localises to the nucleus. Sequence-specific transcription factor which is part of a developmental regulatory system that provides cells with specific positional identities on the anterior-posterior axis. Controls development of mouthparts, and labial and maxillary palps. In Drosophila melanogaster (Fruit fly), this protein is Homeotic protein proboscipedia (pb).